A 1235-amino-acid chain; its full sequence is Cullin-associated NEDD8-dissociated protein 2 (1235 aa).

At S2 the chain carries N-acetylserine. HEAT repeat units lie at residues 2–39, 44–81, 83–119, 129–167, 171–208, 210–246, 254–291, 326–367, 371–408, 431–468, 516–553, 564–603, 607–644, 647–684, 689–726, 730–769, 771–812, 856–893, 895–930, 932–965, 966–1002, 1006–1043, 1047–1083, 1104–1140, 1156–1193, and 1203–1235; these read STGA…KDSI, DSER…KVKE, QVEN…ELPP, NVCR…RLGA, TFHA…ACST, LFVE…SVGR, AHLD…KCPK, TEDS…SRPD, DFHC…HTRP, AQVP…VLPG, PHLP…TLWP, PYVG…HLGD, DDLE…LRLD, PILA…SQGL, PAVR…TQPS, EVSG…TRPP, VEYS…ALSA, GPQR…GNLP, FLPF…DNLK, YVED…LVFV, NPPY…DQPH, PLLK…NKPS, DLLD…DDGL, LDMC…LCPA, TCTA…NPEV, and SAQI…MELS. The segment at 314-345 is disordered; the sequence is YDHDSDDEEQMETEDSEFSEQESEDEYSDDDD. Residues 317–345 are compositionally biased toward acidic residues; that stretch reads DSDDEEQMETEDSEFSEQESEDEYSDDDD.

The protein belongs to the CAND family. Binds TBP, CNOT3 and UBE3C. Ubiquitinated and targeted for proteasomal degradation. Highly expressed in embryonic limb buds.

The protein localises to the nucleus. Probable assembly factor of SCF (SKP1-CUL1-F-box protein) E3 ubiquitin ligase complexes that promotes the exchange of the substrate-recognition F-box subunit in SCF complexes, thereby playing a key role in the cellular repertoire of SCF complexes. This chain is Cullin-associated NEDD8-dissociated protein 2 (Cand2), found in Mus musculus (Mouse).